The chain runs to 745 residues: Aminopeptidase NAALADL1 (745 aa).

Over 1–6 the chain is Cytoplasmic; it reads MHWVKI. Residues 7–28 traverse the membrane as a helical; Signal-anchor for type II membrane protein segment; that stretch reads LGVALGAAALLGLGIILGHFAI. Residues 29 to 745 are Extracellular-facing; that stretch reads PKATSPLTSS…AATLVPVADL (717 aa). N-linked (GlcNAc...) asparagine glycosylation is found at N128, N141, and N235. Residues T263 and L266 each contribute to the Ca(2+) site. N-linked (GlcNAc...) asparagine glycosylation is found at N279, N302, and N329. C301 and C318 are disulfide-bonded. Zn(2+) contacts are provided by H373 and D383. E421 (proton donor/acceptor) is an active-site residue. E422 contributes to the Zn(2+) binding site. Ca(2+) contacts are provided by E430 and E433. A Zn(2+)-binding site is contributed by D450. N-linked (GlcNAc...) asparagine glycans are attached at residues N456 and N497. H550 lines the Zn(2+) pocket. N-linked (GlcNAc...) asparagine glycans are attached at residues N593 and N620.

This sequence belongs to the peptidase M28 family. M28B subfamily. In terms of assembly, homodimer. Zn(2+) is required as a cofactor. Post-translationally, N-glycosylated.

It localises to the apical cell membrane. In terms of biological role, aminopeptidase with broad substrate specificity. Has lower activity with substrates that have Asp or Glu in the P2' position, or Pro in the P3' position. Lacks activity with substrates that have both Pro in the P3' position and Asp or Glu in the P2' position. Lacks carboxypeptidase activity. Lacks dipeptidyl-peptidase IV type activity. This Mus musculus (Mouse) protein is Aminopeptidase NAALADL1 (Naaladl1).